A 93-amino-acid chain; its full sequence is Small ribosomal subunit protein uS19 (93 aa).

It belongs to the universal ribosomal protein uS19 family.

Its function is as follows. Protein S19 forms a complex with S13 that binds strongly to the 16S ribosomal RNA. The chain is Small ribosomal subunit protein uS19 from Clostridioides difficile (strain 630) (Peptoclostridium difficile).